A 463-amino-acid chain; its full sequence is ATP synthase subunit beta (463 aa).

Residue 152 to 159 (GGAGVGKT) participates in ATP binding.

The protein belongs to the ATPase alpha/beta chains family. As to quaternary structure, F-type ATPases have 2 components, CF(1) - the catalytic core - and CF(0) - the membrane proton channel. CF(1) has five subunits: alpha(3), beta(3), gamma(1), delta(1), epsilon(1). CF(0) has three main subunits: a(1), b(2) and c(9-12). The alpha and beta chains form an alternating ring which encloses part of the gamma chain. CF(1) is attached to CF(0) by a central stalk formed by the gamma and epsilon chains, while a peripheral stalk is formed by the delta and b chains.

The protein localises to the cell inner membrane. The enzyme catalyses ATP + H2O + 4 H(+)(in) = ADP + phosphate + 5 H(+)(out). Produces ATP from ADP in the presence of a proton gradient across the membrane. The catalytic sites are hosted primarily by the beta subunits. The protein is ATP synthase subunit beta of Shewanella denitrificans (strain OS217 / ATCC BAA-1090 / DSM 15013).